The following is a 297-amino-acid chain: uncharacterized protein (297 aa).

Positions 187–285 (EKLIATLHAS…GYAPSAVLKN (99 aa)) constitute an HTH araC/xylS-type domain. DNA-binding regions (H-T-H motif) lie at residues 204–225 (ADMAATIPCSEAWLRRLFLRYT) and 252–275 (VGEVADTLNFFDSFHFSKAFKHKF).

This is an uncharacterized protein from Escherichia coli (strain K12).